The following is a 202-amino-acid chain: Protein GrpE (202 aa).

Polar residues predominate over residues Met1–Thr14. Positions Met1–Leu58 are disordered. Over residues Arg21–Leu58 the composition is skewed to low complexity.

This sequence belongs to the GrpE family. In terms of assembly, homodimer.

It is found in the cytoplasm. Functionally, participates actively in the response to hyperosmotic and heat shock by preventing the aggregation of stress-denatured proteins, in association with DnaK and GrpE. It is the nucleotide exchange factor for DnaK and may function as a thermosensor. Unfolded proteins bind initially to DnaJ; upon interaction with the DnaJ-bound protein, DnaK hydrolyzes its bound ATP, resulting in the formation of a stable complex. GrpE releases ADP from DnaK; ATP binding to DnaK triggers the release of the substrate protein, thus completing the reaction cycle. Several rounds of ATP-dependent interactions between DnaJ, DnaK and GrpE are required for fully efficient folding. This chain is Protein GrpE, found in Paraburkholderia phymatum (strain DSM 17167 / CIP 108236 / LMG 21445 / STM815) (Burkholderia phymatum).